Here is a 439-residue protein sequence, read N- to C-terminus: Trigger factor (439 aa).

One can recognise a PPIase FKBP-type domain in the interval 163–248 (GDIAVIDFEG…LNQIKERVLP (86 aa)).

Belongs to the FKBP-type PPIase family. Tig subfamily.

The protein resides in the cytoplasm. It carries out the reaction [protein]-peptidylproline (omega=180) = [protein]-peptidylproline (omega=0). In terms of biological role, involved in protein export. Acts as a chaperone by maintaining the newly synthesized protein in an open conformation. Functions as a peptidyl-prolyl cis-trans isomerase. The polypeptide is Trigger factor (Syntrophotalea carbinolica (strain DSM 2380 / NBRC 103641 / GraBd1) (Pelobacter carbinolicus)).